The chain runs to 258 residues: 6-phosphogluconolactonase (258 aa).

Belongs to the glucosamine/galactosamine-6-phosphate isomerase family. 6-phosphogluconolactonase subfamily.

It catalyses the reaction 6-phospho-D-glucono-1,5-lactone + H2O = 6-phospho-D-gluconate + H(+). Its pathway is carbohydrate degradation; pentose phosphate pathway; D-ribulose 5-phosphate from D-glucose 6-phosphate (oxidative stage): step 2/3. Functionally, hydrolysis of 6-phosphogluconolactone to 6-phosphogluconate. In Chlamydia pneumoniae (Chlamydophila pneumoniae), this protein is 6-phosphogluconolactonase (pgl).